The sequence spans 395 residues: Cytoplasmic tRNA 2-thiolation protein 1 (395 aa).

Over residues 297-309 the composition is skewed to basic residues; it reads TVAYKNKNKNKKK. The segment at 297-335 is disordered; that stretch reads TVAYKNKNKNKKKSNSEQEEQEKQEQEVNPDGSISLNRN.

The protein belongs to the TtcA family. CTU1/NCS6/ATPBD3 subfamily.

The protein localises to the cytoplasm. The protein operates within tRNA modification; 5-methoxycarbonylmethyl-2-thiouridine-tRNA biosynthesis. In terms of biological role, plays a central role in 2-thiolation of mcm(5)S(2)U at tRNA wobble positions of tRNA(Lys), tRNA(Glu) and tRNA(Gln). Directly binds tRNAs and probably acts by catalyzing adenylation of tRNAs, an intermediate required for 2-thiolation. It is unclear whether it acts as a sulfurtransferase that transfers sulfur from thiocarboxylated URM1 onto the uridine of tRNAs at wobble position. Prior mcm(5) tRNA modification by the elongator complex is required for 2-thiolation. May also be involved in protein urmylation. This Candida albicans (strain SC5314 / ATCC MYA-2876) (Yeast) protein is Cytoplasmic tRNA 2-thiolation protein 1.